The following is a 741-amino-acid chain: 2-5A-dependent ribonuclease (741 aa).

The segment at 1-21 (MESRDHNNPQEGPTSSSGRRA) is disordered. Residues 9 to 18 (PQEGPTSSSG) are compositionally biased toward polar residues. ANK repeat units lie at residues 24–53 (EDNHLLIKAVQNEDVDLVQQLLEGGANVNF), 58–87 (GGWTPLHNAVQMSREDIVELLLRHGADPVL), 91–120 (NGATPFILAAIAGSVKLLKLFLSKGADVNE), 124–153 (YGFTAFMEAAVYGKVKALKFLYKRGANVNL), 167–197 (GGATALMDAAEKGHVEVLKILLDEMGADVNA), 201–234 (MGRNALIHALLSSDDSDVEAITHLLLDHGADVNV), 238–268 (RGKTPLILAVEKKHLGLVQRLLEQEHIEIND), 272–301 (DGKTALLLAVELKLKKIAELLCKRGASTDC), and 303–329 (DLVMTARRNYDHSLVKVLLSHGAKEDF). 2-5A binding (P-loop) stretches follow at residues 229–242 (GADVNVRGERGKTP) and 253–275 (GLVQRLLEQEHIEINDTDSDGKT). The region spanning 365 to 586 (IDEKYKIADT…LSDLLGHPFF (222 aa)) is the Protein kinase domain. A C6-type; atypical zinc finger spans residues 395–444 (CEGSPRAQREVSCLQSSRENSHLVTFYGSESHRGHLFVCVTLCEQTLEAC). Residues 589-723 (WESRYRTLRN…KHFPQTHSPN (135 aa)) form the KEN domain. Lys-684 bears the N6-acetyllysine mark. The disordered stretch occupies residues 715-741 (HFPQTHSPNKPQCDGAGGASGLASPGC).

The protein belongs to the protein kinase superfamily. In terms of assembly, monomer (inactive form) or homodimer. Interacts with ABCE1; this interaction inhibits the RNASEL. It depends on Mn(2+) as a cofactor. Mg(2+) serves as cofactor. Highly expressed in spleen and thymus followed by prostate, testis, uterus, small intestine, colon and peripheral blood leukocytes.

The protein localises to the cytoplasm. The protein resides in the mitochondrion. With respect to regulation, after binding to 2-5A (5'-phosphorylated 2',5'-linked oligoadenylates) the homodimerization and subsequent activation occurs. Inhibited by RNASEL inhibitor ABCE1/RLI, a cytoplasmic member of the ATP-binding cassette (ABC) transporter family. In terms of biological role, endoribonuclease that functions in the interferon (IFN) antiviral response. In INF treated and virus infected cells, RNASEL probably mediates its antiviral effects through a combination of direct cleavage of single-stranded viral RNAs, inhibition of protein synthesis through the degradation of rRNA, induction of apoptosis, and induction of other antiviral genes. RNASEL mediated apoptosis is the result of a JNK-dependent stress-response pathway leading to cytochrome c release from mitochondria and caspase-dependent apoptosis. Therefore, activation of RNASEL could lead to elimination of virus infected cells under some circumstances. In the crosstalk between autophagy and apoptosis proposed to induce autophagy as an early stress response to small double-stranded RNA and at later stages of prolonged stress to activate caspase-dependent proteolytic cleavage of BECN1 to terminate autophagy and promote apoptosis. Might play a central role in the regulation of mRNA turnover. Cleaves 3' of UpNp dimers, with preference for UU and UA sequences, to sets of discrete products ranging from between 4 and 22 nucleotides in length. The sequence is that of 2-5A-dependent ribonuclease (RNASEL) from Homo sapiens (Human).